Here is a 124-residue protein sequence, read N- to C-terminus: MALKIRLSRGGSKKRPYYHIVVADVRSPRDGRFLERVGAWDPMLPKDGPRVKLNEERIQYWLGQGAQPTDRVLRFLDAAGLKKRPARNNPHKGEPGKKAQERIAAAKQAAEDAAAAAEADSASE.

The span at leucine 81–proline 90 shows a compositional bias: basic residues. Positions leucine 81–glutamate 124 are disordered. Over residues histidine 91–glutamate 101 the composition is skewed to basic and acidic residues. The span at arginine 102–glutamate 124 shows a compositional bias: low complexity.

Belongs to the bacterial ribosomal protein bS16 family.

The protein is Small ribosomal subunit protein bS16 of Bartonella tribocorum (strain CIP 105476 / IBS 506).